Reading from the N-terminus, the 413-residue chain is MKLSISKVANGARLGVISNIGRNGDKTLEVPGCLLYTKTGSPPHLTHDTLQTIEGVPAVTHITLSTLAEHQEVLEEYKEGIGKFAGMPDAVLYCSTHDPVSPCPTGYNTNKAVSLWGAGGRIEMTAQKFISAQRVLRPDWFQCLSDGEVTPGGNSRKRVKKSVDRTLAFLDECLQLLSGHEDLKPCVLIGAVEGGDLLEERLRSARETAKRPVGGFLLDGFHGGSAEKELSLISAVTAALPEDKPRFIHGMGRPDEVLECVQRGVDLFDSCFPYRVTERGCALIFSHCYRPDPETAVLEKSETSGAERNGDVGAESEEPDADRAEMTSFEICLKEKRFREDFRPLLEGCSCYCCRNHSRAYVHHLLAAKELLAGILLMIHNFQHYFRFFGSIRAALRDGEINALAELIRKQSS.

Residues 298–321 form a disordered region; sequence LEKSETSGAERNGDVGAESEEPDA. 4 residues coordinate Zn(2+): Cys349, Cys351, Cys354, and His380.

This sequence belongs to the queuine tRNA-ribosyltransferase family. QTRT2 subfamily. Heterodimer of a catalytic subunit qtrt1 and an accessory subunit qtrt2. It depends on Zn(2+) as a cofactor.

Its subcellular location is the cytoplasm. It localises to the mitochondrion outer membrane. Its function is as follows. Non-catalytic subunit of the queuine tRNA-ribosyltransferase (TGT) that catalyzes the base-exchange of a guanine (G) residue with queuine (Q) at position 34 (anticodon wobble position) in tRNAs with GU(N) anticodons (tRNA-Asp, -Asn, -His and -Tyr), resulting in the hypermodified nucleoside queuosine (7-(((4,5-cis-dihydroxy-2-cyclopenten-1-yl)amino)methyl)-7-deazaguanosine). The polypeptide is Queuine tRNA-ribosyltransferase accessory subunit 2 (Xenopus tropicalis (Western clawed frog)).